The following is an 86-amino-acid chain: Venom metalloproteinase (86 aa).

Position 7 (Asp-7) interacts with Ca(2+). His-67 serves as a coordination point for Zn(2+). The active site involves Glu-68. The Zn(2+) site is built by His-71 and His-77.

It belongs to the venom metalloproteinase (M12B) family. The cofactor is Zn(2+). As to expression, expressed by the venom gland.

It localises to the secreted. This chain is Venom metalloproteinase, found in Tityus serrulatus (Brazilian scorpion).